The sequence spans 254 residues: MNNVSMRELLEAGAHFGHRTRFWNPKMSEYIFGSRNKIHIINLEKTLPMLSDVTNYVSRLAANKAKILFVGTKRAAQDSIREHAKRCGMPYVDHRWLGGMLTNYKTVRQSIFRLKELKEMKEKGLFNDMIKKEALMLTRELEKLERSLGGIENMGGLPDALFVVDVGFEHIAVEEARRLRIPVIGVVDTNNSPDNIDYVIPGNDDSMRAVDIYVRCVADAILDGKNSNTVGRVSSDSEFVEVTSNSNEEEKSGE.

Belongs to the universal ribosomal protein uS2 family.

This is Small ribosomal subunit protein uS2 from Legionella pneumophila subsp. pneumophila (strain Philadelphia 1 / ATCC 33152 / DSM 7513).